Reading from the N-terminus, the 503-residue chain is Cytochrome P450 11B1, mitochondrial (503 aa).

The transit peptide at Met1–Leu24 directs the protein to the mitochondrion. Heme is bound at residue Cys450.

The protein belongs to the cytochrome P450 family. Heme serves as cofactor.

It localises to the mitochondrion inner membrane. The catalysed reaction is a steroid + 2 reduced [adrenodoxin] + O2 + 2 H(+) = an 11beta-hydroxysteroid + 2 oxidized [adrenodoxin] + H2O. It catalyses the reaction 11-deoxycortisol + 2 reduced [adrenodoxin] + O2 + 2 H(+) = cortisol + 2 oxidized [adrenodoxin] + H2O. The enzyme catalyses 21-hydroxyprogesterone + 2 reduced [adrenodoxin] + O2 + 2 H(+) = corticosterone + 2 oxidized [adrenodoxin] + H2O. It carries out the reaction 21-hydroxyprogesterone + 2 reduced [adrenodoxin] + O2 + 2 H(+) = 18-hydroxy-11-deoxycorticosterone + 2 oxidized [adrenodoxin] + H2O. The catalysed reaction is 21-hydroxyprogesterone + 2 reduced [adrenodoxin] + O2 + 2 H(+) = 19-hydroxy-11-deoxycorticosterone + 2 oxidized [adrenodoxin] + H2O. It catalyses the reaction cortisol + 2 reduced [adrenodoxin] + O2 + 2 H(+) = 18-hydroxycortisol + 2 oxidized [adrenodoxin] + H2O. The enzyme catalyses 11-deoxycortisol + 2 reduced [adrenodoxin] + O2 + 2 H(+) = 18-hydroxy-11-deoxycortisol + 2 oxidized [adrenodoxin] + H2O. It functions in the pathway steroid biosynthesis; glucocorticoid biosynthesis. It participates in steroid hormone biosynthesis. In terms of biological role, a cytochrome P450 monooxygenase involved in the biosynthesis of adrenal corticoids. Catalyzes a variety of reactions that are essential for many species, including detoxification, defense, and the formation of endogenous chemicals like steroid hormones. Steroid 11beta, 18- and 19-hydroxylase with preferred regioselectivity at 11beta, then 18, and lastly 19. Catalyzes the hydroxylation of 11-deoxycortisol and 11-deoxycorticosterone (21-hydroxyprogesterone) at 11beta position, yielding cortisol or corticosterone, respectively, but cannot produce aldosterone. Mechanistically, uses molecular oxygen inserting one oxygen atom into a substrate for hydroxylation and reducing the second into a water molecule. Two electrons are provided by NADPH via a two-protein mitochondrial transfer system comprising flavoprotein FDXR (adrenodoxin/ferredoxin reductase) and nonheme iron-sulfur protein FDX1 or FDX2 (adrenodoxin/ferredoxin). Due to its lack of 18-oxidation activity, it is incapable of generating aldosterone. Could also be involved in the androgen metabolic pathway. This chain is Cytochrome P450 11B1, mitochondrial (CYP11B1), found in Papio hamadryas ursinus (Chacma baboon).